The sequence spans 187 residues: Protein GrpE (187 aa).

The interval methionine 1–threonine 23 is disordered.

It belongs to the GrpE family. Homodimer.

It localises to the cytoplasm. Participates actively in the response to hyperosmotic and heat shock by preventing the aggregation of stress-denatured proteins, in association with DnaK and GrpE. It is the nucleotide exchange factor for DnaK and may function as a thermosensor. Unfolded proteins bind initially to DnaJ; upon interaction with the DnaJ-bound protein, DnaK hydrolyzes its bound ATP, resulting in the formation of a stable complex. GrpE releases ADP from DnaK; ATP binding to DnaK triggers the release of the substrate protein, thus completing the reaction cycle. Several rounds of ATP-dependent interactions between DnaJ, DnaK and GrpE are required for fully efficient folding. This chain is Protein GrpE, found in Mesoplasma florum (strain ATCC 33453 / NBRC 100688 / NCTC 11704 / L1) (Acholeplasma florum).